We begin with the raw amino-acid sequence, 210 residues long: RNA chaperone ProQ (210 aa).

The interval 118-146 (KAAKPEKKRPARRVAAKGQHAKETTTNKA) is disordered. The segment covering 123 to 132 (EKKRPARRVA) has biased composition (basic residues).

Belongs to the ProQ family.

It localises to the cytoplasm. RNA chaperone with significant RNA binding, RNA strand exchange and RNA duplexing activities. In Pasteurella multocida (strain Pm70), this protein is RNA chaperone ProQ.